A 247-amino-acid polypeptide reads, in one-letter code: 7-cyano-7-deazaguanine synthase (247 aa).

Residue 21–31 (FSGGQDSTACL) participates in ATP binding. Zn(2+)-binding residues include Cys209, Cys224, Cys227, and Cys230.

Belongs to the QueC family. Requires Zn(2+) as cofactor.

The enzyme catalyses 7-carboxy-7-deazaguanine + NH4(+) + ATP = 7-cyano-7-deazaguanine + ADP + phosphate + H2O + H(+). It participates in purine metabolism; 7-cyano-7-deazaguanine biosynthesis. Catalyzes the ATP-dependent conversion of 7-carboxy-7-deazaguanine (CDG) to 7-cyano-7-deazaguanine (preQ(0)). The chain is 7-cyano-7-deazaguanine synthase from Halorhodospira halophila (strain DSM 244 / SL1) (Ectothiorhodospira halophila (strain DSM 244 / SL1)).